The following is a 166-amino-acid chain: uncharacterized protein (166 aa).

The disordered stretch occupies residues 25–116 (PEEPPLWVPP…QGADEVHSQH (92 aa)). Ser-105 is subject to Phosphoserine.

This is an uncharacterized protein from Rattus norvegicus (Rat).